The following is a 502-amino-acid chain: Glycogen synthase (502 aa).

Lysine 24 serves as a coordination point for ADP-alpha-D-glucose.

This sequence belongs to the glycosyltransferase 1 family. Bacterial/plant glycogen synthase subfamily.

It carries out the reaction [(1-&gt;4)-alpha-D-glucosyl](n) + ADP-alpha-D-glucose = [(1-&gt;4)-alpha-D-glucosyl](n+1) + ADP + H(+). It participates in glycan biosynthesis; glycogen biosynthesis. In terms of biological role, synthesizes alpha-1,4-glucan chains using ADP-glucose. The sequence is that of Glycogen synthase from Nitrosomonas eutropha (strain DSM 101675 / C91 / Nm57).